The sequence spans 525 residues: Eukaryotic translation initiation factor 3 subunit L (525 aa).

Residues 1-19 are compositionally biased toward acidic residues; the sequence is MYTQADEYDGGDAGYEDDY. A disordered region spans residues 1–21; that stretch reads MYTQADEYDGGDAGYEDDYSG. Residues 296 to 502 enclose the PCI domain; the sequence is DAIRCFSSVL…IHIADTKVDR (207 aa).

The protein belongs to the eIF-3 subunit L family. As to quaternary structure, component of the eukaryotic translation initiation factor 3 (eIF-3) complex.

It localises to the cytoplasm. Its function is as follows. Component of the eukaryotic translation initiation factor 3 (eIF-3) complex, which is involved in protein synthesis of a specialized repertoire of mRNAs and, together with other initiation factors, stimulates binding of mRNA and methionyl-tRNAi to the 40S ribosome. The eIF-3 complex specifically targets and initiates translation of a subset of mRNAs involved in cell proliferation. The protein is Eukaryotic translation initiation factor 3 subunit L of Nematostella vectensis (Starlet sea anemone).